A 468-amino-acid chain; its full sequence is Midnolin (468 aa).

Residues 31–105 (MSLAIHSTTG…LTLVPTVEAG (75 aa)) form the Ubiquitin-like domain. Disordered regions lie at residues 182-264 (PSIA…RSRK) and 404-447 (LRRK…LGLD). Over residues 185-201 (ASPVSSPCRPVSSAARV) the composition is skewed to low complexity. Over residues 202–213 (PPVPTSPSPASP) the composition is skewed to pro residues. Low complexity-rich tracts occupy residues 237–260 (SPTASSSASPGASTTSTPGASPAP) and 419–431 (SPSRKAGRSDSSS).

Interacts with GCK; the interaction occurs preferentially at low glucose levels. Interacts with the proteasome.

It localises to the nucleus. Its subcellular location is the nucleolus. The protein resides in the cytoplasm. It is found in the cytosol. In terms of biological role, facilitates the ubiquitin-independent proteasomal degradation of stimulus-induced transcription factors such as FOSB, EGR1, NR4A1, and IRF4 to the proteasome for degradation. Promotes also the degradation of other substrates such as CBX4. Plays a role in inhibiting the activity of glucokinase GCK and both glucose-induced and basal insulin secretion. This Homo sapiens (Human) protein is Midnolin (MIDN).